We begin with the raw amino-acid sequence, 208 residues long: Large ribosomal subunit protein uL4 (208 aa).

Residues 49–78 (KAKGISDISGTTAKPYRQKHTGRARQGSLR) form a disordered region.

This sequence belongs to the universal ribosomal protein uL4 family. Part of the 50S ribosomal subunit.

In terms of biological role, one of the primary rRNA binding proteins, this protein initially binds near the 5'-end of the 23S rRNA. It is important during the early stages of 50S assembly. It makes multiple contacts with different domains of the 23S rRNA in the assembled 50S subunit and ribosome. Its function is as follows. Forms part of the polypeptide exit tunnel. The sequence is that of Large ribosomal subunit protein uL4 from Anaplasma phagocytophilum (strain HZ).